Reading from the N-terminus, the 210-residue chain is Ribosomal RNA small subunit methyltransferase G (210 aa).

S-adenosyl-L-methionine is bound by residues G76, M81, 127–128, and R145; that span reads VE.

It belongs to the methyltransferase superfamily. RNA methyltransferase RsmG family.

It is found in the cytoplasm. The enzyme catalyses guanosine(527) in 16S rRNA + S-adenosyl-L-methionine = N(7)-methylguanosine(527) in 16S rRNA + S-adenosyl-L-homocysteine. In terms of biological role, specifically methylates the N7 position of guanine in position 527 of 16S rRNA. This Acinetobacter baumannii (strain SDF) protein is Ribosomal RNA small subunit methyltransferase G.